The chain runs to 518 residues: G-protein coupled receptor 161 (518 aa).

Over 1–26 the chain is Extracellular; sequence MNSSSDGANEGAGAAADNGPTKVAES. The N-linked (GlcNAc...) asparagine glycan is linked to Asn-2. A helical membrane pass occupies residues 27-47; that stretch reads IAIIIIDILICLGNLVIVVTL. The Cytoplasmic portion of the chain corresponds to 48–59; that stretch reads YKKSYLLSLSNK. The chain crosses the membrane as a helical span at residues 60 to 80; that stretch reads FVFSLTFSNLLLSMLVLPFVV. Topologically, residues 81-97 are extracellular; sequence VSSILREWIFGVVWCNF. Cys-95 and Cys-173 are joined by a disulfide. Residue Asn-96 is glycosylated (N-linked (GlcNAc...) asparagine). The chain crosses the membrane as a helical span at residues 98–118; that stretch reads SALLYMLISSASMLTLGIIAI. At 119–138 the chain is on the cytoplasmic side; the sequence is DRYYAVLYPMVYPMKITGNR. A helical membrane pass occupies residues 139–159; sequence AVLALVYVWLHSLIGCLPPLF. The Extracellular portion of the chain corresponds to 160-185; the sequence is GWSTLEFDHFKWMCVAAWHKEAGYTA. The helical transmembrane segment at 186–206 threads the bilayer; that stretch reads FWQVWCALLPFIVMMICYGFI. The Cytoplasmic portion of the chain corresponds to 207–264; the sequence is FRVARIKARKIHCGTVIIVQEASQKNGRKNSSTSTSSSGSRKNGFSSIVYSANQCKAL. The helical transmembrane segment at 265-285 threads the bilayer; that stretch reads ITILVVIGAFVLTWGPYMIVI. The Extracellular segment spans residues 286 to 301; it reads STEALKGKNSVSPVLE. Residues 302-322 form a helical membrane-spanning segment; sequence TLATWLSFTSAICHPLIYGLW. The Cytoplasmic portion of the chain corresponds to 323 to 518; sequence NKTVRKELLG…GNIETSKCDV (196 aa). The tract at residues 429–448 is disordered; it reads EVEQKNDARTMPTQPTAPSE. Over residues 439–448 the composition is skewed to polar residues; sequence MPTQPTAPSE.

The protein belongs to the G-protein coupled receptor 1 family.

The protein resides in the cell projection. It is found in the cilium membrane. It localises to the cell membrane. Key negative regulator of Shh signaling during neural tube development. Recruited to primary cilia and acts as a regulator of the PKA-dependent basal repression machinery in Shh signaling by increasing cAMP levels, leading to promote the PKA-dependent processing of gli3 into gli3r and repress the Shh signaling. In presence of shh, it is removed from primary cilia, preventing its activity and allowing activation of the Shh signaling. This Xenopus tropicalis (Western clawed frog) protein is G-protein coupled receptor 161 (gpr161).